Consider the following 1356-residue polypeptide: Serine/threonine-protein kinase PSK1 (1356 aa).

At S10 the chain carries Phosphoserine. Positions 20 to 115 are disordered; that stretch reads KHAITHKGTS…SVDSTVSSPL (96 aa). 2 stretches are compositionally biased toward polar residues: residues 26–37 and 54–64; these read KGTSSSVASLQT and YDTSLSDVSTP. The span at 99–115 shows a compositional bias: low complexity; the sequence is LPSTASSSVDSTVSSPL. Phosphoserine occurs at positions 192, 202, 255, 286, and 327. One can recognise a PAS 1 domain in the interval 450–518; the sequence is RTFTSTKNSA…VLHKLLSTEG (69 aa). The segment covering 592 to 608 has biased composition (low complexity); that stretch reads PTLSSSSTLSLPKMASS. 2 disordered regions span residues 592-612 and 627-660; these read PTLS…PTGS and YTKP…PVRS. The region spanning 738–807 is the PAS 2 domain; that stretch reads LKLKIHSLPY…FINDKYPALD (70 aa). S926 is subject to Phosphoserine. The tract at residues 948–972 is disordered; that stretch reads DSRAHSQSTLSEQEQVPLENDKDSG. A compositionally biased stretch (polar residues) spans 952–961; sequence HSQSTLSEQE. Phosphoserine occurs at positions 1018, 1023, 1035, and 1055. Residues 1021-1032 are compositionally biased toward polar residues; sequence TESLADSKSSGK. Residues 1021 to 1066 are disordered; that stretch reads TESLADSKSSGKGLSPLEEEKLIDENATENGLAGSPKDEDGIIMTN. At T1079 the chain carries Phosphothreonine. One can recognise a Protein kinase domain in the interval 1096–1354; the sequence is FVSLQKMGEG…IDDINNDKWL (259 aa). Residues 1102–1110 and K1125 each bind ATP; that span reads MGEGAYGKV. D1230 functions as the Proton acceptor in the catalytic mechanism.

The protein belongs to the protein kinase superfamily. Ser/Thr protein kinase family.

It is found in the cytoplasm. It carries out the reaction L-seryl-[protein] + ATP = O-phospho-L-seryl-[protein] + ADP + H(+). It catalyses the reaction L-threonyl-[protein] + ATP = O-phospho-L-threonyl-[protein] + ADP + H(+). Functionally, serine/threonine-protein kinase involved in the control of sugar metabolism and translation. Phosphorylates UGP1, which is required for normal glycogen and beta-(1,6)-glucan synthesis. This phosphorylation shifts glucose partitioning toward cell wall glucan synthesis at the expense of glycogen synthesis. In Saccharomyces cerevisiae (strain ATCC 204508 / S288c) (Baker's yeast), this protein is Serine/threonine-protein kinase PSK1 (PSK1).